The chain runs to 267 residues: 3-deoxy-manno-octulosonate cytidylyltransferase 2 (267 aa).

Belongs to the KdsB family.

It localises to the cytoplasm. The enzyme catalyses 3-deoxy-alpha-D-manno-oct-2-ulosonate + CTP = CMP-3-deoxy-beta-D-manno-octulosonate + diphosphate. It participates in nucleotide-sugar biosynthesis; CMP-3-deoxy-D-manno-octulosonate biosynthesis; CMP-3-deoxy-D-manno-octulosonate from 3-deoxy-D-manno-octulosonate and CTP: step 1/1. The protein operates within bacterial outer membrane biogenesis; lipopolysaccharide biosynthesis. Functionally, activates KDO (a required 8-carbon sugar) for incorporation into bacterial lipopolysaccharide in Gram-negative bacteria. This Burkholderia ambifaria (strain MC40-6) protein is 3-deoxy-manno-octulosonate cytidylyltransferase 2.